Here is a 306-residue protein sequence, read N- to C-terminus: MAQVKRIRRKVDGIILLDKPRGFTSNAALQKVRWLLNAEKAGHTGSLDPLATGVLPLCFGEATKFSQYLLDADKGYETVAQLGVTTTTGDAEGEVLERRPVTVGRPEIEALLPRFRGEIKQIPPMYSALKKDGQPLYKLARAGEVVEREARSVTIARLELLALEGEQARLSVDCSKGTYIRTLVEDLGQLLGCGAHVAELRRTKAGPFELARTVTLEELEAVHAEGGSEALDRFLQPVDSGLQDWPLLQFSEHSAFYWLQGQPVRAPEAPKFGMVRVQDHNGRFIGIGEVSDDGRIAPRRLIYTGA.

D48 (nucleophile) is an active-site residue.

This sequence belongs to the pseudouridine synthase TruB family. Type 1 subfamily.

It catalyses the reaction uridine(55) in tRNA = pseudouridine(55) in tRNA. In terms of biological role, responsible for synthesis of pseudouridine from uracil-55 in the psi GC loop of transfer RNAs. In Ectopseudomonas mendocina (strain ymp) (Pseudomonas mendocina), this protein is tRNA pseudouridine synthase B.